A 945-amino-acid polypeptide reads, in one-letter code: Alanine--tRNA ligase (945 aa).

Zn(2+) is bound by residues His-564, His-568, Cys-666, and His-670. Residues 911-945 form a disordered region; sequence SGGGRPDMAQAGGKDASKLPEALQQARETMTEKLG.

The protein belongs to the class-II aminoacyl-tRNA synthetase family. Zn(2+) is required as a cofactor.

It is found in the cytoplasm. The catalysed reaction is tRNA(Ala) + L-alanine + ATP = L-alanyl-tRNA(Ala) + AMP + diphosphate. Its function is as follows. Catalyzes the attachment of alanine to tRNA(Ala) in a two-step reaction: alanine is first activated by ATP to form Ala-AMP and then transferred to the acceptor end of tRNA(Ala). Also edits incorrectly charged Ser-tRNA(Ala) and Gly-tRNA(Ala) via its editing domain. This chain is Alanine--tRNA ligase, found in Rhodopirellula baltica (strain DSM 10527 / NCIMB 13988 / SH1).